The primary structure comprises 165 residues: Lipoprotein signal peptidase (165 aa).

A run of 3 helical transmembrane segments spans residues 9–29 (PFLWISAVAFFTDLITKLAVV), 65–85 (WQKYFFILLALVVSFMILFFL), and 97–119 (TGYALMVGGALANAADRAYHGFV). Residues Asp-121 and Asp-139 contribute to the active site. A helical membrane pass occupies residues 134–154 (VFNIADVAICIGAGLLAIDAF).

This sequence belongs to the peptidase A8 family.

It is found in the cell inner membrane. The enzyme catalyses Release of signal peptides from bacterial membrane prolipoproteins. Hydrolyzes -Xaa-Yaa-Zaa-|-(S,diacylglyceryl)Cys-, in which Xaa is hydrophobic (preferably Leu), and Yaa (Ala or Ser) and Zaa (Gly or Ala) have small, neutral side chains.. Its pathway is protein modification; lipoprotein biosynthesis (signal peptide cleavage). In terms of biological role, this protein specifically catalyzes the removal of signal peptides from prolipoproteins. The chain is Lipoprotein signal peptidase from Histophilus somni (strain 129Pt) (Haemophilus somnus).